A 446-amino-acid polypeptide reads, in one-letter code: tRNA-2-methylthio-N(6)-dimethylallyladenosine synthase (446 aa).

In terms of domain architecture, MTTase N-terminal spans 3 to 124 (KKLYIKTYGC…LPELISKVVR (122 aa)). [4Fe-4S] cluster is bound by residues Cys-12, Cys-48, Cys-87, Cys-162, Cys-166, and Cys-169. A Radical SAM core domain is found at 148–380 (YPQGASAFIS…QKELSSQQLA (233 aa)). One can recognise a TRAM domain in the interval 383-446 (ESCVGSTMKV…SNSLTGEIYT (64 aa)).

The protein belongs to the methylthiotransferase family. MiaB subfamily. In terms of assembly, monomer. Requires [4Fe-4S] cluster as cofactor.

The protein localises to the cytoplasm. The catalysed reaction is N(6)-dimethylallyladenosine(37) in tRNA + (sulfur carrier)-SH + AH2 + 2 S-adenosyl-L-methionine = 2-methylsulfanyl-N(6)-dimethylallyladenosine(37) in tRNA + (sulfur carrier)-H + 5'-deoxyadenosine + L-methionine + A + S-adenosyl-L-homocysteine + 2 H(+). Catalyzes the methylthiolation of N6-(dimethylallyl)adenosine (i(6)A), leading to the formation of 2-methylthio-N6-(dimethylallyl)adenosine (ms(2)i(6)A) at position 37 in tRNAs that read codons beginning with uridine. The protein is tRNA-2-methylthio-N(6)-dimethylallyladenosine synthase of Rickettsia canadensis (strain McKiel).